A 55-amino-acid chain; its full sequence is Probable Rubredoxin-2 (55 aa).

Positions 4–54 (MARYQCMCGWVYDEDKGEPSQNIPPGTKFEDLPDTFRCPQCGLGKNAFRKI) constitute a Rubredoxin-like domain. Fe cation contacts are provided by cysteine 9, cysteine 11, cysteine 41, and cysteine 44.

This sequence belongs to the rubredoxin family. The cofactor is Fe(3+).

Rubredoxin is a small nonheme, iron protein lacking acid-labile sulfide. Its single Fe, chelated to 4 Cys, functions as an electron acceptor and may also stabilize the conformation of the molecule. This chain is Probable Rubredoxin-2, found in Methanocaldococcus jannaschii (strain ATCC 43067 / DSM 2661 / JAL-1 / JCM 10045 / NBRC 100440) (Methanococcus jannaschii).